The following is a 123-amino-acid chain: MANSVYVKFEVPKEIADKVYEALEIARDTGKIGKGTNEVTKNIERNNVALAVIAEDIEPAEIVAHLPILAEEKEIPYVYLPTKEELGEAAGLNVGTASACIIDAGEGQELVDEIVEKVAELKN.

Belongs to the eukaryotic ribosomal protein eL8 family. As to quaternary structure, part of the 50S ribosomal subunit. Probably part of the RNase P complex.

The protein localises to the cytoplasm. In terms of biological role, multifunctional RNA-binding protein that recognizes the K-turn motif in ribosomal RNA, the RNA component of RNase P, box H/ACA, box C/D and box C'/D' sRNAs. The chain is Large ribosomal subunit protein eL8 from Methanosphaera stadtmanae (strain ATCC 43021 / DSM 3091 / JCM 11832 / MCB-3).